Consider the following 144-residue polypeptide: Maximins 6/Hv (144 aa).

The first 18 residues, 1–18 (MNFKYIVAVSFLIASGYA), serve as a signal peptide directing secretion. The propeptide occupies 19 to 43 (RSEENDVQSLSQREVLEEETLREIR). Position 70 is an asparagine amide (N70). The propeptide occupies 74–123 (TAKGHEVMKRLEAVMRDLDSLDHPEEASERETRGFNQEEIANLFTKKEKR). I143 bears the Isoleucine amide mark.

This sequence belongs to the bombinin family. As to expression, expressed by the skin glands.

The protein resides in the secreted. Shows antimicrobial activity against bacteria and against the fungus C.albicans. It has little hemolytic activity. Functionally, shows antimicrobial activity against bacteria and against the fungus C.albicans. Shows strong hemolytic activity. The sequence is that of Maximins 6/Hv from Bombina maxima (Giant fire-bellied toad).